Reading from the N-terminus, the 165-residue chain is Large ribosomal subunit protein uL5 (165 aa).

This sequence belongs to the universal ribosomal protein uL5 family. In terms of assembly, part of the 50S ribosomal subunit; contacts the 5S rRNA and probably tRNA. Forms a bridge to the 30S subunit in the 70S ribosome.

Its function is as follows. This is one of the proteins that bind and probably mediate the attachment of the 5S RNA into the large ribosomal subunit, where it forms part of the central protuberance. In the 70S ribosome it contacts protein S13 of the 30S subunit (bridge B1b), connecting the 2 subunits; this bridge is implicated in subunit movement. May contact the P site tRNA; the 5S rRNA and some of its associated proteins might help stabilize positioning of ribosome-bound tRNAs. The polypeptide is Large ribosomal subunit protein uL5 (Methanoregula boonei (strain DSM 21154 / JCM 14090 / 6A8)).